A 345-amino-acid polypeptide reads, in one-letter code: Homeobox-leucine zipper protein HOX16 (345 aa).

Residues 76-135 (LPEKKRRLTPEQVHLLERSFEEENKLEPERKTELARKLGLQPRQVAVWFQNRRARWKTKQ) constitute a DNA-binding region (homeobox). The leucine-zipper stretch occupies residues 134-178 (KQLERDFDRLKASFDALRADHDALLQDNHRLHSQVMSLTEKLQEK). The tract at residues 220 to 241 (FEEQQEQQVKAEDRLSTGSGGS) is disordered.

It belongs to the HD-ZIP homeobox family. Class I subfamily. As to expression, expressed in seedlings, stems, leaf sheaths and blades and panicles.

The protein localises to the nucleus. In terms of biological role, probable transcription factor. The chain is Homeobox-leucine zipper protein HOX16 (HOX16) from Oryza sativa subsp. indica (Rice).